The chain runs to 303 residues: Dihydroorotate dehydrogenase B (NAD(+)), catalytic subunit (303 aa).

FMN is bound by residues serine 21 and 45–46 (KG). Substrate contacts are provided by residues lysine 45 and 69–73 (NSIGL). FMN-binding residues include asparagine 99 and asparagine 127. Asparagine 127 is a binding site for substrate. Cysteine 130 (nucleophile) is an active-site residue. Residues lysine 165 and isoleucine 191 each coordinate FMN. 192–193 (NT) provides a ligand contact to substrate. FMN contacts are provided by residues glycine 217, 243–244 (GG), and 265–266 (GT).

This sequence belongs to the dihydroorotate dehydrogenase family. Type 1 subfamily. Heterotetramer of 2 PyrK and 2 PyrD type B subunits. FMN is required as a cofactor.

It localises to the cytoplasm. It catalyses the reaction (S)-dihydroorotate + NAD(+) = orotate + NADH + H(+). It participates in pyrimidine metabolism; UMP biosynthesis via de novo pathway; orotate from (S)-dihydroorotate (NAD(+) route): step 1/1. Catalyzes the conversion of dihydroorotate to orotate with NAD(+) as electron acceptor. The chain is Dihydroorotate dehydrogenase B (NAD(+)), catalytic subunit (pyrD) from Thermodesulfovibrio yellowstonii (strain ATCC 51303 / DSM 11347 / YP87).